The primary structure comprises 415 residues: tRNA(Met) cytidine acetate ligase (415 aa).

Residues 7-20, G102, N165, and 190-191 contribute to the ATP site; these read IVEY…HLYH and RI.

It belongs to the TmcAL family.

The protein localises to the cytoplasm. The enzyme catalyses cytidine(34) in elongator tRNA(Met) + acetate + ATP = N(4)-acetylcytidine(34) in elongator tRNA(Met) + AMP + diphosphate. In terms of biological role, catalyzes the formation of N(4)-acetylcytidine (ac(4)C) at the wobble position of elongator tRNA(Met), using acetate and ATP as substrates. First activates an acetate ion to form acetyladenylate (Ac-AMP) and then transfers the acetyl group to tRNA to form ac(4)C34. The sequence is that of tRNA(Met) cytidine acetate ligase from Acetivibrio thermocellus (strain ATCC 27405 / DSM 1237 / JCM 9322 / NBRC 103400 / NCIMB 10682 / NRRL B-4536 / VPI 7372) (Clostridium thermocellum).